Consider the following 144-residue polypeptide: MAAMTAAAVPATGSFQKQDEEWRAVLSPEQFRVLRLKGTDKRGKGEFTKKFEEGTYSCAGCGTALYKSTTKFDSGCGWPAFFDAIPGAIKQTPEAGGRRMEITCAVCDGHLGHVFKGEGYSTPTDQRHCVNSVSLKFSSAGSSQ.

Residues 19 to 140 form the MsrB domain; that stretch reads DEEWRAVLSP…NSVSLKFSSA (122 aa). Residues Cys58, Cys61, Cys104, and Cys107 each contribute to the Zn(2+) site. The cysteines at positions 76 and 129 are disulfide-linked. Residue Cys129 is the Nucleophile of the active site.

This sequence belongs to the MsrB Met sulfoxide reductase family. It depends on Zn(2+) as a cofactor.

It is found in the cytoplasm. It localises to the cytosol. The catalysed reaction is L-methionyl-[protein] + [thioredoxin]-disulfide + H2O = L-methionyl-(R)-S-oxide-[protein] + [thioredoxin]-dithiol. Catalyzes the reduction of methionine sulfoxide (MetSO) to methionine in proteins. Plays a protective role against oxidative stress by restoring activity to proteins that have been inactivated by methionine oxidation. MSRB family specifically reduces the MetSO R-enantiomer. The sequence is that of Peptide methionine sulfoxide reductase B7 (MSRB7) from Arabidopsis thaliana (Mouse-ear cress).